A 1653-amino-acid chain; its full sequence is MATDGASCEPDASRAPEEAAGATAEAARKEFDVDTLSKSELRMLLSVMEGELEARDLVIEALRARRKEVFIQERYGRFNLNDPFLALQRDYEAGAGDKEKKPVCTNPLSILEAVMAHCRKMQERMSTQLAAAESRQKKLEMEKLQLQALEQEHKKLAARLEEERGKNKQVVLMLVKECKQLSGKVIEEAQKLEEVMAKLEEEKKKTNELEEELSAEKRRSTEMEAQMEKQLSEFDTEREQLRAKLNREEAHTTDLKEEIDKMKKMIEQLKRGSDSKPSLSLPRKTKDRRSVSISVGTEGPLTRSVACQTDLAVESTEHVKKSPLTVPVKPSPGSAKGSVGANAALVRPGIDRQASHGDLIGASLPTVPPASANRIEENGPSTGSPPDLTSSAAQSPAAAPHGLPPAHGSQSGSQSPCASAPPHSAPPHPGLNPRVQAARFRFQGNANDPDQNGNTTQSPPSRDVSPTSRDNLVAKQLARNTVTQALSRFTSPPVGAAPRPGASPTGDVGAHPPVGRTSLKTPGVARVDRGNPPPIPPKKPGLSQTPSPPHPQLKVIMDSSRASNAGAKVDNKTVASSPPSSLPQGNRVISEENLPKSSSPQLPPKPSIDLTVAPAGCAVSALATSQVGAWPAETPGLNQPACSGSSLVIPTTTAFRSSINPVSASSCRPGASDSLLVTASGWSPSLTPLLMSGGPAPLAGRPTLLQQAAAQGNVTLLSMLLNEEGLDINYSCEDGHSALYSAAKNGHTDCVRLLLNAEAQVNAADKNGFTPLCAAAAQGHFECVELLIAYDAHINHAADGGQTPLYLACKNGNKECIKLLLEAGTDRSVKTRDGWTPVHAAVDTGNVDSLKLLMYHGAPAHGNSLNEEEPESDASDLDEGEESSEGKSKPVVPADLINHADREGWTAAHIAASKGFKNCLEILCRHRGLEPERRDKCNRTVHDVATDDCKHLLENLNALKIPLRISVGEIQPGNYGSNDFECENTICALHIRKQTSWDDFSKAVSQALTNHFQAISSDGWWSLEDTAFNNTADSDIGLSTSSVRAIMLGSVPWSAGQSLAQSPWDFMRKTKAEQVTVLLSGPQEGCLSSVTYTSMIPLQMLQNYLRLVEQYHNVIFHGPEGSLQDYIVHQLALCLKHRQMAAGFSCEIVSAEVDAGFSKEQLVDLFISSACLIPVKQSPVKKKIIIILENLEKSSLSELLGDFLAPLEIRSTESPCTFQKGNGLSECYYFHENCFLMGTIAKACLQGPDLLVQQHFRWVQLRWDGEPMQGLLQRFLRRKLVNKFRGQMPSPCDPVCKTIAWALSVWRQLNSCLARLGTPEALLGPKYFLPCPVVPGHAQATVKWMSKLWNAVIAPRVQEAILSRASVKRQPGFGQTTTKKHPSQGQQAVVKAALSILLNKAVLHGCPLPRAELDQHTADFKGGSFPLSLVSNYNSCSKKKESGAWRKVNTSPRRKSGRFSSPTWNKPDLSNEGIKNKTISQLNCNKNASLSKQKSLENDLSLMLNLDQSLSLGSDDEADLVRELQSMCSSKSESDISKIADSRDDLRTFDSSGNNPAFSATANNPRMPVSQKEVSPLSSHQTTECSNNKSKTEPGVSRVKSFLPVPRSKVTQCSQNTKRSSSSSNTRQIEINNNSKEENWNLHKNEHIEKLNK.

Disordered stretches follow at residues 1–27 (MATDGASCEPDASRAPEEAAGATAEAA), 203–222 (KKKTNELEEELSAEKRRSTE), 268–297 (QLKRGSDSKPSLSLPRKTKDRRSVSISVGT), 314–339 (ESTEHVKKSPLTVPVKPSPGSAKGSV), and 356–609 (HGDL…PSID). Residues 119 to 276 (RKMQERMSTQ…EQLKRGSDSK (158 aa)) are a coiled coil. Over residues 379-389 (GPSTGSPPDLT) the composition is skewed to polar residues. Low complexity predominate over residues 390–408 (SSAAQSPAAAPHGLPPAHG). Polar residues-rich tracts occupy residues 444 to 470 (GNANDPDQNGNTTQSPPSRDVSPTSRD), 478 to 490 (ARNTVTQALSRFT), and 573 to 584 (TVASSPPSSLPQ). Arg-488 carries the asymmetric dimethylarginine modification. ANK repeat units follow at residues 700–730 (GRPTLLQQAAAQGNVTLLSMLLNEEGLDINY), 734–763 (DGHSALYSAAKNGHTDCVRLLLNAEAQVNA), 767–796 (NGFTPLCAAAAQGHFECVELLIAYDAHINH), 800–829 (GGQTPLYLACKNGNKECIKLLLEAGTDRSV), and 833–862 (DGWTPVHAAVDTGNVDSLKLLMYHGAPAHG). The segment at 860-892 (AHGNSLNEEEPESDASDLDEGEESSEGKSKPVV) is disordered. Residues 866-883 (NEEEPESDASDLDEGEES) are compositionally biased toward acidic residues. An ANK 6 repeat occupies 903–933 (EGWTAAHIAASKGFKNCLEILCRHRGLEPER). The interval 1441-1472 (ESGAWRKVNTSPRRKSGRFSSPTWNKPDLSNE) is disordered. Ser-1514 is subject to Phosphoserine. The segment at 1545 to 1653 (DLRTFDSSGN…KNEHIEKLNK (109 aa)) is disordered. 2 stretches are compositionally biased toward polar residues: residues 1549–1564 (FDSSGNNPAFSATANN) and 1572–1589 (KEVSPLSSHQTTECSNNK). A compositionally biased stretch (low complexity) spans 1614 to 1628 (SQNTKRSSSSSNTRQ). Over residues 1635-1653 (SKEENWNLHKNEHIEKLNK) the composition is skewed to basic and acidic residues.

In terms of assembly, interacts with CTTN/cortactin SH3 domain. Interacts with STRN, STRN4/zinedin and MOB4/phocein; this interactions mediate the association with the STRIPAK core complex and may regulate dendritic spine distribution of the STRIPAK complex in hippocampal neurons. Activation of glutamate receptors weakens the interaction with STRN and STRN4.

The protein resides in the cytoplasm. The protein localises to the cell cortex. It localises to the cell projection. It is found in the dendritic spine. Its function is as follows. Regulates the dendritic spine distribution of CTTN/cortactin in hippocampal neurons, and thus controls dendritic spinogenesis and dendritic spine maintenance. Associates with the striatin-interacting phosphatase and kinase (STRIPAK) core complex to regulate dendritic spine distribution of the STRIPAK complex in hippocampal neurons. This chain is Cortactin-binding protein 2 (CTTNBP2), found in Eulemur macaco macaco (Black lemur).